The following is a 492-amino-acid chain: N-succinylglutamate 5-semialdehyde dehydrogenase (492 aa).

An NAD(+)-binding site is contributed by Gly220–Gly225. Catalysis depends on residues Glu243 and Cys277.

It belongs to the aldehyde dehydrogenase family. AstD subfamily.

The enzyme catalyses N-succinyl-L-glutamate 5-semialdehyde + NAD(+) + H2O = N-succinyl-L-glutamate + NADH + 2 H(+). It participates in amino-acid degradation; L-arginine degradation via AST pathway; L-glutamate and succinate from L-arginine: step 4/5. Functionally, catalyzes the NAD-dependent reduction of succinylglutamate semialdehyde into succinylglutamate. This Escherichia fergusonii (strain ATCC 35469 / DSM 13698 / CCUG 18766 / IAM 14443 / JCM 21226 / LMG 7866 / NBRC 102419 / NCTC 12128 / CDC 0568-73) protein is N-succinylglutamate 5-semialdehyde dehydrogenase.